Reading from the N-terminus, the 158-residue chain is Large ribosomal subunit protein bL21 (158 aa).

The segment at 127–158 (TQETKSAASVKKAAKKSAPQKQAAVASNSKED) is disordered. Over residues 131 to 158 (KSAASVKKAAKKSAPQKQAAVASNSKED) the composition is skewed to low complexity.

The protein belongs to the bacterial ribosomal protein bL21 family. Part of the 50S ribosomal subunit. Contacts protein L20.

In terms of biological role, this protein binds to 23S rRNA in the presence of protein L20. This is Large ribosomal subunit protein bL21 from Bartonella henselae (strain ATCC 49882 / DSM 28221 / CCUG 30454 / Houston 1) (Rochalimaea henselae).